The primary structure comprises 206 residues: Large ribosomal subunit protein uL4 (206 aa).

A disordered region spans residues 63–94; it reads MYKQKGTGRARHHSARAPQFRGGGKAHGPVVR. Basic residues predominate over residues 64 to 77; the sequence is YKQKGTGRARHHSA.

The protein belongs to the universal ribosomal protein uL4 family. Part of the 50S ribosomal subunit.

Functionally, one of the primary rRNA binding proteins, this protein initially binds near the 5'-end of the 23S rRNA. It is important during the early stages of 50S assembly. It makes multiple contacts with different domains of the 23S rRNA in the assembled 50S subunit and ribosome. Forms part of the polypeptide exit tunnel. This is Large ribosomal subunit protein uL4 from Mesorhizobium japonicum (strain LMG 29417 / CECT 9101 / MAFF 303099) (Mesorhizobium loti (strain MAFF 303099)).